We begin with the raw amino-acid sequence, 935 residues long: Protein HIRA (935 aa).

WD repeat units follow at residues 14–58, 72–111, 131–170, 174–213, 222–261, 277–320, and 325–362; these read HDTG…DKKK, ESQS…NSMG, GHSM…DRIT, DIQL…CVKS, IEET…QTWK, RAMP…KPLF, and IFNH…IGEM. The interval 431–556 is disordered; the sequence is SSDIQLTKSM…RNKKRKVPAT (126 aa). Residues 439–468 show a composition bias toward basic and acidic residues; it reads SMEDNSKENESKNSEKTMMEERNKQIDVRK. The segment covering 480–492 has biased composition (polar residues); it reads GTTTADPMTSLSS. The segment covering 520–542 has biased composition (acidic residues); sequence DLEDSSDSDDDDEEEEEDMEISD.

This sequence belongs to the WD repeat HIR1 family.

The protein localises to the nucleus. Functionally, required for replication-independent chromatin assembly and for the periodic repression of histone gene transcription during the cell cycle. The chain is Protein HIRA from Caenorhabditis elegans.